The following is a 570-amino-acid chain: Adenine deaminase (570 aa).

The protein belongs to the metallo-dependent hydrolases superfamily. Adenine deaminase family. Requires Mn(2+) as cofactor.

The catalysed reaction is adenine + H2O + H(+) = hypoxanthine + NH4(+). The polypeptide is Adenine deaminase (Clostridium acetobutylicum (strain ATCC 824 / DSM 792 / JCM 1419 / IAM 19013 / LMG 5710 / NBRC 13948 / NRRL B-527 / VKM B-1787 / 2291 / W)).